A 490-amino-acid chain; its full sequence is Trigger factor (490 aa).

The PPIase FKBP-type domain occupies 162–243 (GDFVSIDLSA…VGSIKERELP (82 aa)). The segment at 433-490 (VDAVLGPRRGGADEAGAEAEAAEEKPAKAKKSADSEKTDKSEKAEKKSKKKSKDDDAE) is disordered. The segment covering 454–477 (AEEKPAKAKKSADSEKTDKSEKAE) has biased composition (basic and acidic residues).

The protein belongs to the FKBP-type PPIase family. Tig subfamily.

Its subcellular location is the cytoplasm. The catalysed reaction is [protein]-peptidylproline (omega=180) = [protein]-peptidylproline (omega=0). Its function is as follows. Involved in protein export. Acts as a chaperone by maintaining the newly synthesized protein in an open conformation. Functions as a peptidyl-prolyl cis-trans isomerase. In Mycobacteroides abscessus (strain ATCC 19977 / DSM 44196 / CCUG 20993 / CIP 104536 / JCM 13569 / NCTC 13031 / TMC 1543 / L948) (Mycobacterium abscessus), this protein is Trigger factor.